A 349-amino-acid chain; its full sequence is Quinone oxidoreductase-like protein 1 (349 aa).

It belongs to the zinc-containing alcohol dehydrogenase family. Quinone oxidoreductase subfamily. Homodimer. Component of the FERRY complex composed of five subunits, TBCK, PPP1R21, FERRY3, CRYZL1 and GATD1 with a ratio of 1:2:1:2:4, respectively. Ubiquitous.

The protein resides in the early endosome. In terms of biological role, component of the FERRY complex (Five-subunit Endosomal Rab5 and RNA/ribosome intermediary). The FERRY complex directly interacts with mRNAs and RAB5A, and functions as a RAB5A effector involved in the localization and the distribution of specific mRNAs most likely by mediating their endosomal transport. The complex recruits mRNAs and ribosomes to early endosomes through direct mRNA-interaction. The chain is Quinone oxidoreductase-like protein 1 (CRYZL1) from Homo sapiens (Human).